We begin with the raw amino-acid sequence, 88 residues long: Small ribosomal subunit protein bS18 (88 aa).

This sequence belongs to the bacterial ribosomal protein bS18 family. As to quaternary structure, part of the 30S ribosomal subunit. Forms a tight heterodimer with protein bS6.

Binds as a heterodimer with protein bS6 to the central domain of the 16S rRNA, where it helps stabilize the platform of the 30S subunit. In Aliarcobacter butzleri (strain RM4018) (Arcobacter butzleri), this protein is Small ribosomal subunit protein bS18.